Reading from the N-terminus, the 423-residue chain is Endochitinase 42 (423 aa).

Positions 1-22 (MLSFLGKSVALLAALQATLSSP) are cleaved as a signal peptide. Residues 23–34 (KPGHRRASVEKR) constitute a propeptide that is removed on maturation. The region spanning 38 to 401 (YANSVYFTNW…GTSHRALGGL (364 aa)) is the GH18 domain. Residues 102–103 (GT) and 129–132 (GGWT) contribute to the chitin site. Glutamate 171 acts as the Proton donor in catalysis. Tyrosine 172 lines the chitin pocket. The N-linked (GlcNAc...) asparagine glycan is linked to asparagine 218. Chitin is bound by residues 237 to 240 (MAYD) and tryptophan 378.

Belongs to the glycosyl hydrolase 18 family. Chitinase class V subfamily.

Its subcellular location is the secreted. The catalysed reaction is Random endo-hydrolysis of N-acetyl-beta-D-glucosaminide (1-&gt;4)-beta-linkages in chitin and chitodextrins.. In terms of biological role, secreted chitinase involved in the degradation of chitin, a component of the cell walls of fungi and exoskeletal elements of some animals (including worms and arthropods). Plays a morphogenetic role during apical growth, cell division and differentiation (cell wall morphogenesis). Also acts as an antifungal agent. Involved in the degradation and further assimilation of phytopathogenic fungi, namely mycoparasitism, the major mechanism accounting for the antagonistic activity against phytopathogenic fungi displayed by Trichoderma. The protein is Endochitinase 42 (chit42) of Trichoderma harzianum (Hypocrea lixii).